Here is a 147-residue protein sequence, read N- to C-terminus: Hemoglobin subunit epsilon (147 aa).

One can recognise a Globin domain in the interval 3 to 147 (HFTAEEKATV…VANALAHKYH (145 aa)). Phosphoserine is present on residues S14 and S51. Residues H64 and H93 each coordinate heme b.

Belongs to the globin family. In terms of assembly, heterotetramer of two alpha chains and two epsilon chains in early embryonic hemoglobin Gower-2; two zeta chains and two epsilon chains in early embryonic hemoglobin Gower-1. In terms of tissue distribution, red blood cells.

Its function is as follows. The epsilon chain is a beta-type chain of early mammalian embryonic hemoglobin. In Bradypus tridactylus (Pale-throated three-toed sloth), this protein is Hemoglobin subunit epsilon (HBE1).